Reading from the N-terminus, the 251-residue chain is Lactose phosphotransferase system repressor (251 aa).

The HTH deoR-type domain maps to 3–58 (KHERLDEIAKLVNKKGTIRTNEIVEGLNVSDMTVRRDLIELENKGILTKIHGGARS). A DNA-binding region (H-T-H motif) is located at residues 20 to 39 (IRTNEIVEGLNVSDMTVRRD).

Functionally, repressor of the lactose catabolism operon. Galactose-6-phosphate is the inducer. This is Lactose phosphotransferase system repressor (lacR) from Staphylococcus aureus (strain N315).